The primary structure comprises 193 residues: Xanthine phosphoribosyltransferase (193 aa).

L20 and T27 together coordinate xanthine. Residue 128–132 (ANGQA) participates in 5-phospho-alpha-D-ribose 1-diphosphate binding. K156 serves as a coordination point for xanthine.

It belongs to the purine/pyrimidine phosphoribosyltransferase family. Xpt subfamily. As to quaternary structure, homodimer.

It is found in the cytoplasm. The catalysed reaction is XMP + diphosphate = xanthine + 5-phospho-alpha-D-ribose 1-diphosphate. Its pathway is purine metabolism; XMP biosynthesis via salvage pathway; XMP from xanthine: step 1/1. In terms of biological role, converts the preformed base xanthine, a product of nucleic acid breakdown, to xanthosine 5'-monophosphate (XMP), so it can be reused for RNA or DNA synthesis. The chain is Xanthine phosphoribosyltransferase from Streptococcus pyogenes serotype M49 (strain NZ131).